The sequence spans 398 residues: Carbamoyl phosphate synthase large chain (398 aa).

One can recognise an ATP-grasp domain in the interval 1 to 187; the sequence is KLGVPQPEGG…LAKIAAKVIV (187 aa). The tract at residues 1–255 is carbamoyl phosphate synthetic domain; that stretch reads KLGVPQPEGG…YKAELAADNV (255 aa). Residues R32, D71, L73, E78, G103, V104, H105, S106, Q146, and E158 each contribute to the ATP site. Positions 146, 158, and 160 each coordinate Mg(2+). Mn(2+) is bound by residues Q146, E158, and N160. The MGS-like domain occupies 254-395; that stretch reads NVLPLTGKVF…NEYHKEMEEE (142 aa). An allosteric domain region spans residues 256–398; sequence LPLTGKVFLS…HKEMEEENKV (143 aa).

This sequence belongs to the CarB family. Composed of two chains; the small (or glutamine) chain promotes the hydrolysis of glutamine to ammonia, which is used by the large (or ammonia) chain to synthesize carbamoyl phosphate. Tetramer of heterodimers (alpha,beta)4. Mg(2+) is required as a cofactor. Requires Mn(2+) as cofactor.

The catalysed reaction is hydrogencarbonate + L-glutamine + 2 ATP + H2O = carbamoyl phosphate + L-glutamate + 2 ADP + phosphate + 2 H(+). It catalyses the reaction hydrogencarbonate + NH4(+) + 2 ATP = carbamoyl phosphate + 2 ADP + phosphate + 2 H(+). Its pathway is amino-acid biosynthesis; L-arginine biosynthesis; carbamoyl phosphate from bicarbonate: step 1/1. It functions in the pathway pyrimidine metabolism; UMP biosynthesis via de novo pathway; (S)-dihydroorotate from bicarbonate: step 1/3. Functionally, large subunit of the glutamine-dependent carbamoyl phosphate synthetase (CPSase). CPSase catalyzes the formation of carbamoyl phosphate from the ammonia moiety of glutamine, carbonate, and phosphate donated by ATP, constituting the first step of 2 biosynthetic pathways, one leading to arginine and/or urea and the other to pyrimidine nucleotides. The large subunit (synthetase) binds the substrates ammonia (free or transferred from glutamine from the small subunit), hydrogencarbonate and ATP and carries out an ATP-coupled ligase reaction, activating hydrogencarbonate by forming carboxy phosphate which reacts with ammonia to form carbamoyl phosphate. The chain is Carbamoyl phosphate synthase large chain from Methanosarcina barkeri.